The chain runs to 350 residues: MIRVAVIGGSGYTGGELLRLLAMHNKVEVTYITSREYAGKPISIIHPNLRGFYNINFSQFSWDKIGEKAEAVFLALPHKVSVDYVPKLLEMGLQVVDLSADFRLKNPELYKLWYEFDHPYPDLLKKAVYGIPEIHYEELKGAKLIASPGCNSTATILAAAPLVYSNILDNYRLISDVKVGSSEGGAKPSEGSHHPERQNAIRPYEAEGHRHAAEVEQELQYISKKEVKISLVPHAVSTIRGALASVHGWLISDDLNEIEFWKKIIEFYRGRKFVRVIRGNIHPYPDPKYVIGSNFVDIGFAVEKRVGRITMFSAIDNLMKGAAGQAVQAFNVSRGFEEDEGLRIPPLRPA.

10–13 (SGYT) is an NADP(+) binding site. The active site involves cysteine 150. Asparagine 317 contributes to the NADP(+) binding site.

It belongs to the NAGSA dehydrogenase family. Type 1 subfamily. LysY sub-subfamily.

It is found in the cytoplasm. The enzyme catalyses [amino-group carrier protein]-C-terminal-N-(1-carboxy-5-oxopentan-1-yl)-L-glutamine + phosphate + NADP(+) = [amino-group carrier protein]-C-terminal-N-(1-carboxy-5-phosphooxy-5-oxopentan-1-yl)-L-glutamine + NADPH + H(+). It catalyses the reaction [amino-group carrier protein]-C-terminal-gamma-(L-glutamyl-5-semialdehyde)-L-glutamate + phosphate + NADP(+) = [amino-group carrier protein]-C-terminal-gamma-(5-phospho-L-glutamyl)-L-glutamate + NADPH + H(+). It participates in amino-acid biosynthesis; L-lysine biosynthesis via AAA pathway; L-lysine from L-alpha-aminoadipate (Thermus route): step 3/5. The protein operates within amino-acid biosynthesis; L-arginine biosynthesis. Its function is as follows. Involved in both the arginine and lysine biosynthetic pathways. The sequence is that of [LysW]-L-2-aminoadipate/[LysW]-L-glutamate phosphate reductase from Sulfolobus acidocaldarius (strain ATCC 33909 / DSM 639 / JCM 8929 / NBRC 15157 / NCIMB 11770).